The chain runs to 467 residues: Probable rhamnogalacturonase A (467 aa).

The N-terminal stretch at 1–19 (MHSLSLISLALLSPLLVNA) is a signal peptide. A disulfide bridge connects residues Cys-40 and Cys-66. Residue Asp-217 is the Proton donor of the active site. Cys-219 and Cys-236 form a disulfide bridge. 2 N-linked (GlcNAc...) asparagine glycosylation sites follow: Asn-237 and Asn-252. His-292 is a catalytic residue. A glycan (N-linked (GlcNAc...) asparagine) is linked at Asn-319. 2 disulfides stabilise this stretch: Cys-342/Cys-348 and Cys-370/Cys-379.

This sequence belongs to the glycosyl hydrolase 28 family.

The protein localises to the secreted. It catalyses the reaction Endohydrolysis of alpha-D-GalA-(1-&gt;2)-alpha-L-Rha glycosidic bond in the rhamnogalacturonan I backbone with initial inversion of anomeric configuration releasing oligosaccharides with beta-D-GalA at the reducing end.. In terms of biological role, pectinolytic enzymes consist of four classes of enzymes: pectine lyase, polygalacturonase, pectin methylesterase and rhamnogalacturonase. Hydrolyzes alpha-D-galacturonopyranosyl-(1,2)-alpha-L-rhamnopyranosyl linkages in the backbone of the hairy regions of pectins. In Aspergillus oryzae (strain ATCC 42149 / RIB 40) (Yellow koji mold), this protein is Probable rhamnogalacturonase A (rhgA).